The primary structure comprises 114 residues: ATP-dependent Clp protease adapter protein ClpS (114 aa).

Belongs to the ClpS family. Binds to the N-terminal domain of the chaperone ClpA.

Its function is as follows. Involved in the modulation of the specificity of the ClpAP-mediated ATP-dependent protein degradation. The chain is ATP-dependent Clp protease adapter protein ClpS from Bdellovibrio bacteriovorus (strain ATCC 15356 / DSM 50701 / NCIMB 9529 / HD100).